The following is a 224-amino-acid chain: Small ribosomal subunit protein uS3 (224 aa).

Positions 38–106 (LREFVKEKLG…EVYLNVVEVR (69 aa)) constitute a KH type-2 domain.

This sequence belongs to the universal ribosomal protein uS3 family. Part of the 30S ribosomal subunit. Forms a tight complex with proteins S10 and S14.

Its function is as follows. Binds the lower part of the 30S subunit head. Binds mRNA in the 70S ribosome, positioning it for translation. The polypeptide is Small ribosomal subunit protein uS3 (Anaeromyxobacter dehalogenans (strain 2CP-1 / ATCC BAA-258)).